Reading from the N-terminus, the 736-residue chain is Phosphoribosylformylglycinamidine synthase subunit PurL (736 aa).

His48 is a catalytic residue. Tyr51 and Lys90 together coordinate ATP. Glu92 provides a ligand contact to Mg(2+). Substrate contacts are provided by residues Ser93–His96 and Arg115. The Proton acceptor role is filled by His94. Asp116 lines the Mg(2+) pocket. Gln239 contributes to the substrate binding site. Asp267 is a Mg(2+) binding site. Glu311 to Gln313 is a binding site for substrate. ATP is bound by residues Asp492 and Gly529. Position 530 (Asn530) interacts with Mg(2+). Substrate is bound at residue Ser532.

The protein belongs to the FGAMS family. As to quaternary structure, monomer. Part of the FGAM synthase complex composed of 1 PurL, 1 PurQ and 2 PurS subunits.

Its subcellular location is the cytoplasm. It carries out the reaction N(2)-formyl-N(1)-(5-phospho-beta-D-ribosyl)glycinamide + L-glutamine + ATP + H2O = 2-formamido-N(1)-(5-O-phospho-beta-D-ribosyl)acetamidine + L-glutamate + ADP + phosphate + H(+). Its pathway is purine metabolism; IMP biosynthesis via de novo pathway; 5-amino-1-(5-phospho-D-ribosyl)imidazole from N(2)-formyl-N(1)-(5-phospho-D-ribosyl)glycinamide: step 1/2. In terms of biological role, part of the phosphoribosylformylglycinamidine synthase complex involved in the purines biosynthetic pathway. Catalyzes the ATP-dependent conversion of formylglycinamide ribonucleotide (FGAR) and glutamine to yield formylglycinamidine ribonucleotide (FGAM) and glutamate. The FGAM synthase complex is composed of three subunits. PurQ produces an ammonia molecule by converting glutamine to glutamate. PurL transfers the ammonia molecule to FGAR to form FGAM in an ATP-dependent manner. PurS interacts with PurQ and PurL and is thought to assist in the transfer of the ammonia molecule from PurQ to PurL. The chain is Phosphoribosylformylglycinamidine synthase subunit PurL from Beijerinckia indica subsp. indica (strain ATCC 9039 / DSM 1715 / NCIMB 8712).